The sequence spans 106 residues: UPF0060 membrane protein AZC_0909 (106 aa).

The next 4 helical transmembrane spans lie at 4–24 (PLFA…WHVV), 27–47 (GGSP…AALL), 58–78 (AFAA…WAAE), and 84–104 (RFDA…LFAP).

Belongs to the UPF0060 family.

The protein localises to the cell inner membrane. This is UPF0060 membrane protein AZC_0909 from Azorhizobium caulinodans (strain ATCC 43989 / DSM 5975 / JCM 20966 / LMG 6465 / NBRC 14845 / NCIMB 13405 / ORS 571).